Here is a 302-residue protein sequence, read N- to C-terminus: Short-chain dehydrogenase/reductase 1 (302 aa).

NADP(+) is bound by residues 20-23 (NKGL), Arg43, 71-72 (DV), and Asn98. Ser170 contacts substrate. NADP(+)-binding positions include Tyr226, Lys230, and 257–262 (VKTDIN). Tyr226 serves as the catalytic Proton acceptor.

The protein belongs to the short-chain dehydrogenases/reductases (SDR) family. Mainly expressed in flowers and flower buds, to a lesser extent in leaves and, at low levels, in stems and roots.

It participates in secondary metabolite biosynthesis; terpenoid biosynthesis. Its function is as follows. Component of the oleanane-type triterpene saponins (e.g. saponarioside A and saponarioside B) biosynthetic pathway, leading to the production of natural products with detergent properties used as traditional sources of soap. A dehydrogenase/reductase that, together with UGT74CD1, mediates the conversion of QA-tri to QA-triF; UGT74CD1 may transfer 4-keto-6-deoxy-glucose to QA-tri, which is in turn reduced to D-fucose by SDR1, thus leading to QA-triF formation via the initiation of the C-28 sugar chain. In Saponaria officinalis (Common soapwort), this protein is Short-chain dehydrogenase/reductase 1.